The sequence spans 215 residues: Ribosomal RNA small subunit methyltransferase G (215 aa).

Residues glycine 82, methionine 87, valine 133–glutamate 134, and arginine 148 each bind S-adenosyl-L-methionine.

Belongs to the methyltransferase superfamily. RNA methyltransferase RsmG family.

It is found in the cytoplasm. The catalysed reaction is guanosine(527) in 16S rRNA + S-adenosyl-L-methionine = N(7)-methylguanosine(527) in 16S rRNA + S-adenosyl-L-homocysteine. Functionally, specifically methylates the N7 position of guanine in position 527 of 16S rRNA. The polypeptide is Ribosomal RNA small subunit methyltransferase G (Stutzerimonas stutzeri (strain A1501) (Pseudomonas stutzeri)).